Consider the following 354-residue polypeptide: MSSKYPRSVRGCLPLWALTLEAALILLFFFFTHYDASLEDQKGLVATYQVGQDLTVMAALGLGFLTSNLRRHSWSSVAFNLFMLALGVQWAILLDGFLSQFPPGKVVIKLLSIRLATMSAMSSLISVGAVLGKVNLVQLVVMVLVELTAFGTMRMVINNIFKTDYHVNIMHIHVFAAYFGLTVAWCLPKPPPEGTEDKEQIANSPSLSAMLGALFLWIFWPSFNSALLTNPIERKNAVFNTYYALAVSTVTAISVSSLAHPQGKINMTYMHNAVLAGGVAVGTSCHLISSPWLAMVLGLVAGLISIGGAKCLPDWLPDPLQHWGTQLGHGDSSHVWFPDRFAPKSQNMESTSCG.

8 helical membrane-spanning segments follow: residues 11-31 (GCLP…FFFF), 45-65 (VATY…LGFL), 77-97 (VAFN…LDGF), 125-145 (ISVG…MVLV), 167-187 (VNIM…AWCL), 209-229 (AMLG…ALLT), 238-258 (VFNT…VSSL), and 287-307 (LISS…ISIG).

It belongs to the ammonium transporter (TC 2.A.49) family. Rh subfamily.

It localises to the membrane. May be part of an oligomeric complex which is likely to have a transport or channel function in the erythrocyte membrane. This chain is RH-like protein, found in Hylobates pileatus (Pileated gibbon).